The primary structure comprises 1137 residues: Ribonucleoside-diphosphate reductase large subunit (1137 aa).

Positions Met1–Glu32 are disordered. The short motif at Ser64–Asp84 is the RIP homotypic interaction motif (RHIM) element. Disordered stretches follow at residues Gly124–Gly159 and Ala173–Pro315. Over residues Ala131 to Asp141 the composition is skewed to polar residues. Residues Ser196 to Ser206 show a composition bias toward acidic residues. A compositionally biased stretch (low complexity) spans Ala281–Ala290. Positions Val291 to Pro304 are enriched in basic and acidic residues. Substrate contacts are provided by residues Thr566, Ser581–Cys582, Gly612, Asn791–Glu795, and Pro968–Ser972. An intrachain disulfide couples Cys582 to Cys808. Asn791 (proton acceptor) is an active-site residue. Cys793 acts as the Cysteine radical intermediate in catalysis. The active-site Proton acceptor is the Glu795.

This sequence belongs to the ribonucleoside diphosphate reductase large chain family. As to quaternary structure, heterotetramer composed of a homodimer of the large subunit (R1) and a homodimer of the small subunit (R2). Larger multisubunit protein complex are also active, composed of (R1)n(R2)n. Self-assembles (via RIP homotypic interaction motif/RHIM) into homomeric fibrillar amyloid structures. Interacts (via RHIM) with human RIPK1 (via RHIM). Interacts (via RHIM) with human RIPK3 (via RHIM); the interaction leads to heteromeric amyloid assemblies. Interacts (via RHIM) with human ZBP1 (via RHIM); the interaction leads to heteromeric amyloid assemblies. Interacts (via C-terminus) with host CASP8.

It catalyses the reaction a 2'-deoxyribonucleoside 5'-diphosphate + [thioredoxin]-disulfide + H2O = a ribonucleoside 5'-diphosphate + [thioredoxin]-dithiol. In terms of biological role, ribonucleoside-diphosphate reductase holoenzyme that provides the precursors necessary for viral DNA synthesis. Allows virus growth in non-dividing cells, as well as reactivation from latency in infected hosts. Catalyzes the biosynthesis of deoxyribonucleotides from the corresponding ribonucleotides. Prevents host necroptosis by targeting host RIPK1 and RIPK3, thereby hampering the formation of necroptotic RIPK1-RIPK3 complexes. Forms hetero-amyloid structures with host proteins RIPK3 or ZBP1 which may prevent RIPK3- and ZBP1-mediated necroptosis. In addition, inhibits extrinsic apoptosis by targeting host CASP8. The chain is Ribonucleoside-diphosphate reductase large subunit from Human herpesvirus 1 (strain 17) (HHV-1).